The sequence spans 175 residues: Large ribosomal subunit protein uL10 (175 aa).

Belongs to the universal ribosomal protein uL10 family. Part of the ribosomal stalk of the 50S ribosomal subunit. The N-terminus interacts with L11 and the large rRNA to form the base of the stalk. The C-terminus forms an elongated spine to which L12 dimers bind in a sequential fashion forming a multimeric L10(L12)X complex.

In terms of biological role, forms part of the ribosomal stalk, playing a central role in the interaction of the ribosome with GTP-bound translation factors. The polypeptide is Large ribosomal subunit protein uL10 (Delftia acidovorans (strain DSM 14801 / SPH-1)).